The primary structure comprises 400 residues: Beta-ketoadipyl-CoA thiolase (400 aa).

The active-site Acyl-thioester intermediate is the Cys90. Active-site proton acceptor residues include His356 and Cys386.

It belongs to the thiolase-like superfamily. Thiolase family.

The catalysed reaction is succinyl-CoA + acetyl-CoA = 3-oxoadipyl-CoA + CoA. It participates in aromatic compound metabolism; beta-ketoadipate pathway; acetyl-CoA and succinyl-CoA from 3-oxoadipate: step 2/2. In terms of biological role, catalyzes thiolytic cleavage of beta-ketoadipyl-CoA to succinyl-CoA and acetyl-CoA. The sequence is that of Beta-ketoadipyl-CoA thiolase (pcaF) from Pseudomonas putida (Arthrobacter siderocapsulatus).